A 1809-amino-acid chain; its full sequence is Stereocilin (1809 aa).

Residues 1–22 form the signal peptide; it reads MALSLQPQLLLLLSLLPQEVTS. Asn63, Asn200, Asn295, Asn352, and Asn364 each carry an N-linked (GlcNAc...) asparagine glycan. Residues 376 to 426 form a disordered region; it reads PATPRPPPTTPRPPPTTPQPPPTTTQPIPDTTQPPPVTPRPPPTTPQPPPS. Pro residues-rich tracts occupy residues 378–399 and 407–426; these read TPRP…PPTT and TQPP…PPPS. Asn467, Asn516, Asn580, Asn605, Asn696, Asn860, Asn952, Asn1000, Asn1213, and Asn1308 each carry an N-linked (GlcNAc...) asparagine glycan.

The protein belongs to the stereocilin family. In terms of tissue distribution, strongly expressed in the inner ear, detected in the testis, and barely detected in the eye. Detected in the six sensory areas of the inner ear by immunofluorescence. Expressed only in the sensory hair cells and associated with the stereocilia, the stiff microvilli forming the structure for mechanoreception of sound stimulation.

The protein localises to the cell surface. Its subcellular location is the cell projection. It localises to the kinocilium. The protein resides in the stereocilium. Its function is as follows. Essential to the formation of horizontal top connectors between outer hair cell stereocilia. The polypeptide is Stereocilin (Strc) (Mus musculus (Mouse)).